Consider the following 396-residue polypeptide: Elongation factor Tu (396 aa).

A tr-type G domain is found at 11-205; it reads KPHVNIGTIG…VVDEYIPTPK (195 aa). The G1 stretch occupies residues 20-27; sequence GHVDHGKT. Position 20-27 (20-27) interacts with GTP; that stretch reads GHVDHGKT. Mg(2+) is bound at residue threonine 27. The segment at 61–65 is G2; that stretch reads GITIN. A G3 region spans residues 82–85; it reads DAPG. GTP contacts are provided by residues 82-86 and 137-140; these read DAPGH and NKTD. The tract at residues 137–140 is G4; sequence NKTD. The interval 175–177 is G5; the sequence is SAL.

The protein belongs to the TRAFAC class translation factor GTPase superfamily. Classic translation factor GTPase family. EF-Tu/EF-1A subfamily. As to quaternary structure, monomer.

The protein localises to the cytoplasm. The enzyme catalyses GTP + H2O = GDP + phosphate + H(+). GTP hydrolase that promotes the GTP-dependent binding of aminoacyl-tRNA to the A-site of ribosomes during protein biosynthesis. This is Elongation factor Tu from Limosilactobacillus fermentum (strain NBRC 3956 / LMG 18251) (Lactobacillus fermentum).